A 300-amino-acid polypeptide reads, in one-letter code: Ribosomal protein L11 methyltransferase (300 aa).

Thr152, Gly173, Asp195, and Asn234 together coordinate S-adenosyl-L-methionine.

The protein belongs to the methyltransferase superfamily. PrmA family.

It is found in the cytoplasm. It catalyses the reaction L-lysyl-[protein] + 3 S-adenosyl-L-methionine = N(6),N(6),N(6)-trimethyl-L-lysyl-[protein] + 3 S-adenosyl-L-homocysteine + 3 H(+). In terms of biological role, methylates ribosomal protein L11. The polypeptide is Ribosomal protein L11 methyltransferase (Burkholderia mallei (strain NCTC 10247)).